Here is a 652-residue protein sequence, read N- to C-terminus: Acetyl-coenzyme A synthetase (652 aa).

CoA-binding positions include 191–194 (RAGR), Thr311, and Asn335. Residues 387–389 (GEP), 411–416 (DTWWQT), Asp500, and Arg515 each bind ATP. Ser523 contacts CoA. An ATP-binding site is contributed by Arg526. Residues Val537, His539, and Ile542 each contribute to the Mg(2+) site. Arg584 contacts CoA. Lys609 is modified (N6-acetyllysine).

The protein belongs to the ATP-dependent AMP-binding enzyme family. Requires Mg(2+) as cofactor. Post-translationally, acetylated. Deacetylation by the SIR2-homolog deacetylase activates the enzyme.

The enzyme catalyses acetate + ATP + CoA = acetyl-CoA + AMP + diphosphate. Its function is as follows. Catalyzes the conversion of acetate into acetyl-CoA (AcCoA), an essential intermediate at the junction of anabolic and catabolic pathways. Acs undergoes a two-step reaction. In the first half reaction, Acs combines acetate with ATP to form acetyl-adenylate (AcAMP) intermediate. In the second half reaction, it can then transfer the acetyl group from AcAMP to the sulfhydryl group of CoA, forming the product AcCoA. Enables the cell to use acetate during aerobic growth to generate energy via the TCA cycle, and biosynthetic compounds via the glyoxylate shunt. Acetylates CheY, the response regulator involved in flagellar movement and chemotaxis. The sequence is that of Acetyl-coenzyme A synthetase from Escherichia coli O6:H1 (strain CFT073 / ATCC 700928 / UPEC).